We begin with the raw amino-acid sequence, 304 residues long: Ribosomal RNA small subunit methyltransferase H (304 aa).

S-adenosyl-L-methionine is bound by residues Gly37–His39, Asp57, Phe79, Asp100, and His107.

The protein belongs to the methyltransferase superfamily. RsmH family.

It is found in the cytoplasm. It catalyses the reaction cytidine(1402) in 16S rRNA + S-adenosyl-L-methionine = N(4)-methylcytidine(1402) in 16S rRNA + S-adenosyl-L-homocysteine + H(+). Specifically methylates the N4 position of cytidine in position 1402 (C1402) of 16S rRNA. In Bacteroides fragilis (strain ATCC 25285 / DSM 2151 / CCUG 4856 / JCM 11019 / LMG 10263 / NCTC 9343 / Onslow / VPI 2553 / EN-2), this protein is Ribosomal RNA small subunit methyltransferase H.